The following is a 28-amino-acid chain: 3-phytase B (28 aa).

The segment at 1 to 28 (RDPTGCEVDQVIMVKRHGERYPSPSAGK) is disordered. The active-site Nucleophile is the His17.

It belongs to the histidine acid phosphatase family.

It carries out the reaction 1D-myo-inositol hexakisphosphate + H2O = 1D-myo-inositol 1,2,4,5,6-pentakisphosphate + phosphate. Its function is as follows. Catalyzes the hydrolysis of inorganic orthophosphate from phytate. In Aspergillus ficuum, this protein is 3-phytase B (phyB).